Consider the following 237-residue polypeptide: MKKITLALSAVCLLFTLNHSANALVSSPSTLNPGTNVAKLAEQAPVHWVSVAQIENSLTGRPPMAVGFDIDDTVLFSSPGFWRGKKTYSPDSDDYLKNPAFWEKMNNGWDEFSIPKEVARQLIDMHVRRGDSIYFVTGRSQTKTETVSKTLADNFHIPAANMNPVIFAGDKPGQNTKVQWLQEKNMRIFYGDSDNDITAARDCGIRGIRILRAANSTYKPLPQAGAFGEEVIVNSEY.

Residues 1–23 (MKKITLALSAVCLLFTLNHSANA) form the signal peptide. The active-site Nucleophile is the Asp-69. 2 residues coordinate Mg(2+): Asp-69 and Asp-71. The active-site Proton donor is Asp-71. Substrate contacts are provided by residues 137 to 138 (TG) and Lys-177. Residue Asp-192 participates in Mg(2+) binding.

The protein belongs to the class B bacterial acid phosphatase family. As to quaternary structure, homotetramer. It depends on Mg(2+) as a cofactor.

It localises to the periplasm. It carries out the reaction a phosphate monoester + H2O = an alcohol + phosphate. Its function is as follows. Dephosphorylates several organic phosphate monoesters including monophosphate nucleotides (NMPs), coenzyme A (CoA), nicotinamide adenine dinucleotide phosphate (NADP), flavin mononucleotide (FMN) and phosphorylated 5-6 carbon sugars in vitro. Also has a phosphotransferase activity catalyzing the transfer of low-energy phosphate groups from organic phosphate monoesters to free hydroxyl groups of various organic compounds. This is Class B acid phosphatase (aphA) from Salmonella typhi.